The chain runs to 182 residues: Ribosome-recycling factor (182 aa).

Belongs to the RRF family.

It is found in the cytoplasm. Its function is as follows. Responsible for the release of ribosomes from messenger RNA at the termination of protein biosynthesis. May increase the efficiency of translation by recycling ribosomes from one round of translation to another. This Picosynechococcus sp. (strain ATCC 27264 / PCC 7002 / PR-6) (Agmenellum quadruplicatum) protein is Ribosome-recycling factor.